The sequence spans 87 residues: Small ribosomal subunit protein bS20 (87 aa).

Positions 1-22 (MANSAQARKRARQSLKARAHNA) are disordered. The segment covering 7-19 (ARKRARQSLKARA) has biased composition (basic residues).

Belongs to the bacterial ribosomal protein bS20 family.

In terms of biological role, binds directly to 16S ribosomal RNA. The protein is Small ribosomal subunit protein bS20 of Laribacter hongkongensis (strain HLHK9).